A 342-amino-acid polypeptide reads, in one-letter code: Methionyl-tRNA formyltransferase (342 aa).

Residue 108–111 participates in (6S)-5,6,7,8-tetrahydrofolate binding; that stretch reads SLLP.

The protein belongs to the Fmt family.

It carries out the reaction L-methionyl-tRNA(fMet) + (6R)-10-formyltetrahydrofolate = N-formyl-L-methionyl-tRNA(fMet) + (6S)-5,6,7,8-tetrahydrofolate + H(+). Attaches a formyl group to the free amino group of methionyl-tRNA(fMet). The formyl group appears to play a dual role in the initiator identity of N-formylmethionyl-tRNA by promoting its recognition by IF2 and preventing the misappropriation of this tRNA by the elongation apparatus. The protein is Methionyl-tRNA formyltransferase of Prochlorococcus marinus (strain MIT 9313).